We begin with the raw amino-acid sequence, 332 residues long: Palmitoyltransferase ZDHHC15B (332 aa).

The Cytoplasmic portion of the chain corresponds to 1-14 (MALSRALRCCQRIF). Residues 15-35 (SWIPVIIISSVVLWSYYAYVF) traverse the membrane as a helical segment. At 36–50 (ELCFVTLSNNLERVT) the chain is on the lumenal side. The chain crosses the membrane as a helical span at residues 51 to 71 (YLLIFHVCFIMFCWTYWKAIF). Residues 72–166 (TPPSTPTKKF…NNCVGFSNYK (95 aa)) are Cytoplasmic-facing. The DHHC domain maps to 123–173 (RFCDRCQVIKPDRCHHCSVCETCVLKMDHHCPWVNNCVGFSNYKFFLLFLS). Positions 125 and 128 each coordinate Zn(2+). Lysine 132 provides a ligand contact to substrate. Positions 138, 139, 142, 145, and 152 each coordinate Zn(2+). Catalysis depends on cysteine 153, which acts as the S-palmitoyl cysteine intermediate. Cysteine 159 contacts Zn(2+). Residues 167–187 (FFLLFLSYSMIYCVFIASTVF) form a helical membrane-spanning segment. Residues 188–204 (QYFLKFWVGDLPNGPAK) are Lumenal-facing. The chain crosses the membrane as a helical span at residues 205 to 228 (FHVLFLLFVALMFFVSLMFLFGYH). Topologically, residues 229 to 332 (CWLVAKNRST…GSSLLIRTES (104 aa)) are cytoplasmic. A disordered region spans residues 305-332 (EEKWVEDGGSDEESADENGSSLLIRTES).

It belongs to the DHHC palmitoyltransferase family. In terms of processing, autopalmitoylated (in vitro).

The protein resides in the golgi apparatus membrane. The protein localises to the postsynaptic density. It carries out the reaction L-cysteinyl-[protein] + hexadecanoyl-CoA = S-hexadecanoyl-L-cysteinyl-[protein] + CoA. The catalysed reaction is L-cysteinyl-[protein] + tetradecanoyl-CoA = S-tetradecanoyl-L-cysteinyl-[protein] + CoA. The enzyme catalyses L-cysteinyl-[protein] + octadecanoyl-CoA = S-octadecanoyl-L-cysteinyl-[protein] + CoA. Functionally, palmitoyltransferase that catalyzes the addition of palmitate onto various protein substrates. Has no stringent fatty acid selectivity and in addition to palmitate can also transfer onto target proteins myristate from tetradecanoyl-CoA and stearate from octadecanoyl-CoA. May thereby regulate target proteins association and localization to membranes. In the nervous system, probably catalyzes the palmitoylation of synaptic proteins and is involved in the differentiation of dopaminergic neurons and the development of the diencephalon. This is Palmitoyltransferase ZDHHC15B (zdhhc15b) from Danio rerio (Zebrafish).